A 465-amino-acid chain; its full sequence is Methionine aminopeptidase 2-2 (465 aa).

Residues 1-13 (MGSKTPNDHRRGP) are compositionally biased toward basic and acidic residues. The disordered stretch occupies residues 1-92 (MGSKTPNDHR…KKKTLLGGLQ (92 aa)). A compositionally biased stretch (acidic residues) spans 44-55 (GETEDGEDEDDD). Residues 71–86 (TKKKNKRKKNKKKKKT) show a composition bias toward basic residues. His217 serves as a coordination point for substrate. The a divalent metal cation site is built by Asp238, Asp249, and His318. Residue His326 participates in substrate binding. A divalent metal cation contacts are provided by Glu351 and Glu446.

Belongs to the peptidase M24A family. Methionine aminopeptidase eukaryotic type 2 subfamily. It depends on Co(2+) as a cofactor. Requires Zn(2+) as cofactor. Mn(2+) serves as cofactor. Fe(2+) is required as a cofactor.

The protein localises to the cytoplasm. It carries out the reaction Release of N-terminal amino acids, preferentially methionine, from peptides and arylamides.. Cotranslationally removes the N-terminal methionine from nascent proteins. The N-terminal methionine is often cleaved when the second residue in the primary sequence is small and uncharged (Met-Ala-, Cys, Gly, Pro, Ser, Thr, or Val). This is Methionine aminopeptidase 2-2 from Ajellomyces dermatitidis (strain ER-3 / ATCC MYA-2586) (Blastomyces dermatitidis).